The sequence spans 400 residues: DNA primase small subunit PriS (400 aa).

Catalysis depends on residues D98, D100, and D306.

This sequence belongs to the eukaryotic-type primase small subunit family. In terms of assembly, heterodimer of a small subunit (PriS) and a large subunit (PriL). Requires Mg(2+) as cofactor. The cofactor is Mn(2+).

Catalytic subunit of DNA primase, an RNA polymerase that catalyzes the synthesis of short RNA molecules used as primers for DNA polymerase during DNA replication. The small subunit contains the primase catalytic core and has DNA synthesis activity on its own. Binding to the large subunit stabilizes and modulates the activity, increasing the rate of DNA synthesis while decreasing the length of the DNA fragments, and conferring RNA synthesis capability. The DNA polymerase activity may enable DNA primase to also catalyze primer extension after primer synthesis. May also play a role in DNA repair. This chain is DNA primase small subunit PriS, found in Methanocella arvoryzae (strain DSM 22066 / NBRC 105507 / MRE50).